The primary structure comprises 452 residues: Fructose-2,6-bisphosphatase (452 aa).

Residues 1 to 223 form a 6-phosphofructo-2-kinase region; the sequence is MGYSTISNDN…VFYVMNIRPK (223 aa). Residue 20 to 28 participates in ATP binding; sequence GLPARGKSF. Arginine 53 and arginine 78 together coordinate beta-D-fructose 6-phosphate. The active site involves aspartate 104. Beta-D-fructose 6-phosphate-binding residues include threonine 106 and arginine 112. Residue 143-148 participates in ATP binding; it reads NAKDIG. Beta-D-fructose 6-phosphate contacts are provided by arginine 169 and tyrosine 173. The interval 224 to 452 is fructose-2,6-bisphosphatase; the sequence is PKYIWLSRHG…LNDSPLEDKF (229 aa). Position 231 (arginine 231) interacts with beta-D-fructose 2,6-bisphosphate. Residue histidine 232 is the Tele-phosphohistidine intermediate of the active site. Beta-D-fructose 2,6-bisphosphate is bound by residues asparagine 238 and glycine 244. Glutamate 302 (proton donor/acceptor) is an active-site residue. 6 residues coordinate beta-D-fructose 2,6-bisphosphate: tyrosine 313, arginine 327, lysine 331, tyrosine 342, glutamine 368, and arginine 372. 324-327 provides a ligand contact to ATP; sequence FKAR. ATP-binding positions include 368-372 and tyrosine 404; that span reads QAVLR. Phosphoserine is present on residues serine 435 and serine 446.

It in the C-terminal section; belongs to the phosphoglycerate mutase family.

It catalyses the reaction beta-D-fructose 2,6-bisphosphate + H2O = beta-D-fructose 6-phosphate + phosphate. With respect to regulation, inhibited by fructose 6-P, activated by glycerol 3-P. In terms of biological role, monofunctional, high-specificity fructose-2,6-bisphosphatase, which releases phosphate from the 2-position of fructose 2,6-bisphosphate. Has no detectable 6-phosphofructo-2-kinase activity. This is Fructose-2,6-bisphosphatase from Saccharomyces cerevisiae (strain ATCC 204508 / S288c) (Baker's yeast).